A 404-amino-acid chain; its full sequence is Argininosuccinate synthase (404 aa).

Residues 13–21 (AYSGGLDTS) and Ala-41 contribute to the ATP site. 2 residues coordinate L-citrulline: Tyr-93 and Ser-98. Gly-123 provides a ligand contact to ATP. Residues Thr-125, Asn-129, and Asp-130 each coordinate L-aspartate. Asn-129 provides a ligand contact to L-citrulline. Residues Arg-133, Ser-182, Ser-191, Glu-267, and Tyr-279 each contribute to the L-citrulline site.

It belongs to the argininosuccinate synthase family. Type 1 subfamily. In terms of assembly, homotetramer.

The protein resides in the cytoplasm. The enzyme catalyses L-citrulline + L-aspartate + ATP = 2-(N(omega)-L-arginino)succinate + AMP + diphosphate + H(+). Its pathway is amino-acid biosynthesis; L-arginine biosynthesis; L-arginine from L-ornithine and carbamoyl phosphate: step 2/3. This Moritella profunda protein is Argininosuccinate synthase.